An 828-amino-acid polypeptide reads, in one-letter code: Glycerol-3-phosphate acyltransferase (828 aa).

Residues 310–315 (HRSHID) carry the HXXXXD motif motif.

The protein belongs to the GPAT/DAPAT family.

Its subcellular location is the cell inner membrane. The enzyme catalyses sn-glycerol 3-phosphate + an acyl-CoA = a 1-acyl-sn-glycero-3-phosphate + CoA. It functions in the pathway phospholipid metabolism; CDP-diacylglycerol biosynthesis; CDP-diacylglycerol from sn-glycerol 3-phosphate: step 1/3. The protein is Glycerol-3-phosphate acyltransferase of Pseudomonas putida (strain ATCC 47054 / DSM 6125 / CFBP 8728 / NCIMB 11950 / KT2440).